A 179-amino-acid polypeptide reads, in one-letter code: Large ribosomal subunit protein uL5 (179 aa).

This sequence belongs to the universal ribosomal protein uL5 family. In terms of assembly, part of the 50S ribosomal subunit; part of the 5S rRNA/L5/L18/L25 subcomplex. Contacts the 5S rRNA and the P site tRNA. Forms a bridge to the 30S subunit in the 70S ribosome.

Functionally, this is one of the proteins that bind and probably mediate the attachment of the 5S RNA into the large ribosomal subunit, where it forms part of the central protuberance. In the 70S ribosome it contacts protein S13 of the 30S subunit (bridge B1b), connecting the 2 subunits; this bridge is implicated in subunit movement. Contacts the P site tRNA; the 5S rRNA and some of its associated proteins might help stabilize positioning of ribosome-bound tRNAs. This is Large ribosomal subunit protein uL5 from Lawsonia intracellularis (strain PHE/MN1-00).